The following is a 260-amino-acid chain: DNA repair protein RecO (260 aa).

This sequence belongs to the RecO family.

Its function is as follows. Involved in DNA repair and RecF pathway recombination. The polypeptide is DNA repair protein RecO (Ligilactobacillus salivarius (strain UCC118) (Lactobacillus salivarius)).